Consider the following 720-residue polypeptide: Fatty acid CoA ligase Acsl3 (720 aa).

Residues 21–41 form a helical; Signal-anchor for type III membrane protein membrane-spanning segment; the sequence is ILLYFIHFIISLYTILTYIPF. Residues 42–720 lie on the Cytoplasmic side of the membrane; that stretch reads YFLCESKQEK…ADIERMYGRK (679 aa). Ser-683 is subject to Phosphoserine.

The protein belongs to the ATP-dependent AMP-binding enzyme family. Mg(2+) serves as cofactor.

The protein resides in the mitochondrion outer membrane. It localises to the peroxisome membrane. It is found in the microsome membrane. The protein localises to the endoplasmic reticulum membrane. The catalysed reaction is a long-chain fatty acid + ATP + CoA = a long-chain fatty acyl-CoA + AMP + diphosphate. It carries out the reaction (E)-hexadec-2-enoate + ATP + CoA = (2E)-hexadecenoyl-CoA + AMP + diphosphate. It catalyses the reaction (5Z,8Z,11Z,14Z)-eicosatetraenoate + ATP + CoA = (5Z,8Z,11Z,14Z)-eicosatetraenoyl-CoA + AMP + diphosphate. The enzyme catalyses 15-hydroxy-(5Z,8Z,11Z,13E)-eicosatetraenoate + ATP + CoA = 15-hydroxy-(5Z,8Z,11Z,13E)-eicosatetraenoyl-CoA + AMP + diphosphate. The catalysed reaction is 12-hydroxy-(5Z,8Z,10E,14Z)-eicosatetraenoate + ATP + CoA = 12-hydroxy-(5Z,8Z,10E,14Z)-eicosatetraenoyl-CoA + AMP + diphosphate. It carries out the reaction 5-hydroxy-(6E,8Z,11Z,14Z)-eicosatetraenoate + ATP + CoA = 5-hydroxy-(6E,8Z,11Z,14Z)-eicosatetraenoyl-CoA + AMP + diphosphate. It catalyses the reaction 14,15-epoxy-(5Z,8Z,11Z)-eicosatrienoate + ATP + CoA = 14,15-epoxy-(5Z,8Z,11Z)-eicosatrienoyl-CoA + AMP + diphosphate. The enzyme catalyses 11,12-epoxy-(5Z,8Z,14Z)-eicosatrienoate + ATP + CoA = 11,12-epoxy-(5Z,8Z,14Z)-eicosatrienoyl-CoA + AMP + diphosphate. The catalysed reaction is a medium-chain fatty acid + ATP + CoA = a medium-chain fatty acyl-CoA + AMP + diphosphate. It carries out the reaction hexadecanoate + ATP + CoA = hexadecanoyl-CoA + AMP + diphosphate. It catalyses the reaction tetradecanoate + ATP + CoA = tetradecanoyl-CoA + AMP + diphosphate. The enzyme catalyses dodecanoate + ATP + CoA = dodecanoyl-CoA + AMP + diphosphate. The catalysed reaction is octadecanoate + ATP + CoA = octadecanoyl-CoA + AMP + diphosphate. It carries out the reaction eicosanoate + ATP + CoA = eicosanoyl-CoA + AMP + diphosphate. It catalyses the reaction (9Z)-octadecenoate + ATP + CoA = (9Z)-octadecenoyl-CoA + AMP + diphosphate. The enzyme catalyses (9Z)-hexadecenoate + ATP + CoA = (9Z)-hexadecenoyl-CoA + AMP + diphosphate. The catalysed reaction is (9Z,12Z)-octadecadienoate + ATP + CoA = (9Z,12Z)-octadecadienoyl-CoA + AMP + diphosphate. It carries out the reaction (9Z,12Z,15Z)-octadecatrienoate + ATP + CoA = (9Z,12Z,15Z)-octadecatrienoyl-CoA + AMP + diphosphate. It catalyses the reaction (4Z,7Z,10Z,13Z,16Z,19Z)-docosahexaenoate + ATP + CoA = (4Z,7Z,10Z,13Z,16Z,19Z)-docosahexaenoyl-CoA + AMP + diphosphate. The enzyme catalyses (5Z,8Z,11Z,14Z,17Z)-eicosapentaenoate + ATP + CoA = (5Z,8Z,11Z,14Z,17Z)-eicosapentaenoyl-CoA + AMP + diphosphate. The catalysed reaction is a fatty acid + ATP + CoA = a fatty acyl-CoA + AMP + diphosphate. Its function is as follows. Acyl-CoA synthetases (ACSL) activates long-chain fatty acids for both synthesis of cellular lipids, and degradation via beta-oxidation. ACSL3 is required for the incorporation of fatty acids into phosphatidylcholine, the major phospholipid located on the surface of VLDL (very low density lipoproteins). Has mainly an anabolic role in energy metabolism. Mediates hepatic lipogenesis. Preferentially uses myristate, laurate, arachidonate and eicosapentaenoate as substrates. Both isoforms exhibit the same level of activity. In Mus musculus (Mouse), this protein is Fatty acid CoA ligase Acsl3.